The sequence spans 432 residues: Glutamyl-tRNA reductase (432 aa).

Substrate contacts are provided by residues 55–58 (TCNR), serine 114, 119–121 (ETQ), and glutamine 125. Catalysis depends on cysteine 56, which acts as the Nucleophile. Residue 194–199 (GAGEMI) participates in NADP(+) binding.

This sequence belongs to the glutamyl-tRNA reductase family. In terms of assembly, homodimer.

It carries out the reaction (S)-4-amino-5-oxopentanoate + tRNA(Glu) + NADP(+) = L-glutamyl-tRNA(Glu) + NADPH + H(+). It participates in porphyrin-containing compound metabolism; protoporphyrin-IX biosynthesis; 5-aminolevulinate from L-glutamyl-tRNA(Glu): step 1/2. In terms of biological role, catalyzes the NADPH-dependent reduction of glutamyl-tRNA(Glu) to glutamate 1-semialdehyde (GSA). This is Glutamyl-tRNA reductase from Burkholderia orbicola (strain MC0-3).